Consider the following 177-residue polypeptide: Large ribosomal subunit protein uL6 (177 aa).

The protein belongs to the universal ribosomal protein uL6 family. As to quaternary structure, part of the 50S ribosomal subunit.

Functionally, this protein binds to the 23S rRNA, and is important in its secondary structure. It is located near the subunit interface in the base of the L7/L12 stalk, and near the tRNA binding site of the peptidyltransferase center. The chain is Large ribosomal subunit protein uL6 from Bordetella pertussis (strain Tohama I / ATCC BAA-589 / NCTC 13251).